Reading from the N-terminus, the 300-residue chain is tRNA dimethylallyltransferase (300 aa).

9–16 (GPTASGKS) lines the ATP pocket. 11-16 (TASGKS) provides a ligand contact to substrate. Residues 34–37 (DSKQ) are interaction with substrate tRNA.

It belongs to the IPP transferase family. In terms of assembly, monomer. Mg(2+) is required as a cofactor.

It carries out the reaction adenosine(37) in tRNA + dimethylallyl diphosphate = N(6)-dimethylallyladenosine(37) in tRNA + diphosphate. Its function is as follows. Catalyzes the transfer of a dimethylallyl group onto the adenine at position 37 in tRNAs that read codons beginning with uridine, leading to the formation of N6-(dimethylallyl)adenosine (i(6)A). The sequence is that of tRNA dimethylallyltransferase from Ehrlichia canis (strain Jake).